Reading from the N-terminus, the 224-residue chain is Urease accessory protein UreF (224 aa).

It belongs to the UreF family. As to quaternary structure, ureD, UreF and UreG form a complex that acts as a GTP-hydrolysis-dependent molecular chaperone, activating the urease apoprotein by helping to assemble the nickel containing metallocenter of UreC. The UreE protein probably delivers the nickel.

It is found in the cytoplasm. Required for maturation of urease via the functional incorporation of the urease nickel metallocenter. This is Urease accessory protein UreF from Nitrosococcus oceani (strain ATCC 19707 / BCRC 17464 / JCM 30415 / NCIMB 11848 / C-107).